Reading from the N-terminus, the 95-residue chain is Aspartyl/glutamyl-tRNA(Asn/Gln) amidotransferase subunit C (95 aa).

It belongs to the GatC family. As to quaternary structure, heterotrimer of A, B and C subunits.

It carries out the reaction L-glutamyl-tRNA(Gln) + L-glutamine + ATP + H2O = L-glutaminyl-tRNA(Gln) + L-glutamate + ADP + phosphate + H(+). The catalysed reaction is L-aspartyl-tRNA(Asn) + L-glutamine + ATP + H2O = L-asparaginyl-tRNA(Asn) + L-glutamate + ADP + phosphate + 2 H(+). Functionally, allows the formation of correctly charged Asn-tRNA(Asn) or Gln-tRNA(Gln) through the transamidation of misacylated Asp-tRNA(Asn) or Glu-tRNA(Gln) in organisms which lack either or both of asparaginyl-tRNA or glutaminyl-tRNA synthetases. The reaction takes place in the presence of glutamine and ATP through an activated phospho-Asp-tRNA(Asn) or phospho-Glu-tRNA(Gln). The sequence is that of Aspartyl/glutamyl-tRNA(Asn/Gln) amidotransferase subunit C from Xanthobacter autotrophicus (strain ATCC BAA-1158 / Py2).